A 438-amino-acid polypeptide reads, in one-letter code: uncharacterized protein (438 aa).

Lysine 273 is modified (N6-(pyridoxal phosphate)lysine).

The protein belongs to the class-III pyridoxal-phosphate-dependent aminotransferase family. Pyridoxal 5'-phosphate is required as a cofactor.

Its subcellular location is the mitochondrion. This is an uncharacterized protein from Schizosaccharomyces pombe (strain 972 / ATCC 24843) (Fission yeast).